The primary structure comprises 232 residues: GTP cyclohydrolase 1 (232 aa).

The tract at residues 1 to 24 is disordered; that stretch reads MSDNLKSYQDNHIENEDEEIYERS. Zn(2+)-binding residues include Cys121, His124, and Cys192.

This sequence belongs to the GTP cyclohydrolase I family. In terms of assembly, toroid-shaped homodecamer, composed of two pentamers of five dimers.

The enzyme catalyses GTP + H2O = 7,8-dihydroneopterin 3'-triphosphate + formate + H(+). The protein operates within cofactor biosynthesis; 7,8-dihydroneopterin triphosphate biosynthesis; 7,8-dihydroneopterin triphosphate from GTP: step 1/1. First enzyme in the biosynthesis of tetrahydrobiopterin (BH4). Catalyzes the conversion of GTP into dihydroneopterin triphosphate (7,8-dihydroneopterin 3'-triphosphate), which is subsequently catalyzed by 6-pyruvoyltetrahydropterin synthase (ptsA) and sepiapterin reductase (sprA). The polypeptide is GTP cyclohydrolase 1 (gchA) (Dictyostelium discoideum (Social amoeba)).